The chain runs to 395 residues: Phosphoglycerate kinase (395 aa).

Substrate is bound by residues 20 to 22 (DLN), arginine 35, 58 to 61 (HFGR), arginine 117, and arginine 150. ATP-binding positions include lysine 200, glutamate 322, and 352 to 355 (GGDT).

The protein belongs to the phosphoglycerate kinase family. As to quaternary structure, monomer.

Its subcellular location is the cytoplasm. The catalysed reaction is (2R)-3-phosphoglycerate + ATP = (2R)-3-phospho-glyceroyl phosphate + ADP. The protein operates within carbohydrate degradation; glycolysis; pyruvate from D-glyceraldehyde 3-phosphate: step 2/5. In Brucella suis biovar 1 (strain 1330), this protein is Phosphoglycerate kinase.